A 95-amino-acid polypeptide reads, in one-letter code: Costars family protein WS02710_H03 (95 aa).

The protein belongs to the costars family.

This is Costars family protein WS02710_H03 from Picea sitchensis (Sitka spruce).